An 892-amino-acid polypeptide reads, in one-letter code: Translation initiation factor IF-2 (892 aa).

Composition is skewed to basic and acidic residues over residues 93–159 (VKRD…KDKV) and 166–216 (DMTK…EENK). The segment at 93–304 (VKRDPQEAER…SSLQQGFQKP (212 aa)) is disordered. Residues 254–269 (GRGRNAKAARPAKKGK) show a composition bias toward basic residues. The span at 270-282 (HAESKADREEARA) shows a compositional bias: basic and acidic residues. The tr-type G domain occupies 391–560 (PRAPVVTIMG…LLQAEVLELK (170 aa)). The segment at 400–407 (GHVDHGKT) is G1. 400–407 (GHVDHGKT) contacts GTP. The interval 425-429 (GITQH) is G2. The G3 stretch occupies residues 446-449 (DTPG). Residues 446–450 (DTPGH) and 500–503 (NKID) each bind GTP. A G4 region spans residues 500-503 (NKID). The interval 536-538 (SAK) is G5.

Belongs to the TRAFAC class translation factor GTPase superfamily. Classic translation factor GTPase family. IF-2 subfamily.

Its subcellular location is the cytoplasm. One of the essential components for the initiation of protein synthesis. Protects formylmethionyl-tRNA from spontaneous hydrolysis and promotes its binding to the 30S ribosomal subunits. Also involved in the hydrolysis of GTP during the formation of the 70S ribosomal complex. The sequence is that of Translation initiation factor IF-2 from Salmonella gallinarum (strain 287/91 / NCTC 13346).